The following is a 697-amino-acid chain: Elongation factor G 2 (697 aa).

Residues 5–280 (SLYRNIGIFA…AVVDYLPSPT (276 aa)) enclose the tr-type G domain. GTP is bound by residues 14–21 (AHVDAGKT), 78–82 (DTPGH), and 132–135 (NKLD).

Belongs to the TRAFAC class translation factor GTPase superfamily. Classic translation factor GTPase family. EF-G/EF-2 subfamily.

It localises to the cytoplasm. Functionally, catalyzes the GTP-dependent ribosomal translocation step during translation elongation. During this step, the ribosome changes from the pre-translocational (PRE) to the post-translocational (POST) state as the newly formed A-site-bound peptidyl-tRNA and P-site-bound deacylated tRNA move to the P and E sites, respectively. Catalyzes the coordinated movement of the two tRNA molecules, the mRNA and conformational changes in the ribosome. The chain is Elongation factor G 2 from Saccharophagus degradans (strain 2-40 / ATCC 43961 / DSM 17024).